The primary structure comprises 354 residues: tRNA-specific 2-thiouridylase MnmA (354 aa).

ATP-binding positions include 6–13 (LLSGGVDS) and Leu-33. The Nucleophile role is filled by Cys-100. Cys-100 and Cys-195 are oxidised to a cystine. An ATP-binding site is contributed by Gly-123. The interval 145–147 (KDQ) is interaction with tRNA. The active-site Cysteine persulfide intermediate is the Cys-195.

The protein belongs to the MnmA/TRMU family.

It is found in the cytoplasm. The enzyme catalyses S-sulfanyl-L-cysteinyl-[protein] + uridine(34) in tRNA + AH2 + ATP = 2-thiouridine(34) in tRNA + L-cysteinyl-[protein] + A + AMP + diphosphate + H(+). Functionally, catalyzes the 2-thiolation of uridine at the wobble position (U34) of tRNA, leading to the formation of s(2)U34. The sequence is that of tRNA-specific 2-thiouridylase MnmA from Borrelia hermsii (strain HS1 / DAH).